The following is a 278-amino-acid chain: TnpB-like protein MJ0751 (278 aa).

Positions 222, 225, 239, and 242 each coordinate Zn(2+).

This sequence in the N-terminal section; belongs to the transposase 2 family. It in the C-terminal section; belongs to the transposase 35 family.

This chain is TnpB-like protein MJ0751, found in Methanocaldococcus jannaschii (strain ATCC 43067 / DSM 2661 / JAL-1 / JCM 10045 / NBRC 100440) (Methanococcus jannaschii).